The following is a 217-amino-acid chain: 3,4-dihydroxy-2-butanone 4-phosphate synthase (217 aa).

D-ribulose 5-phosphate contacts are provided by residues 37–38, D42, 150–154, and E174; these read RE and RRGHT. E38 serves as a coordination point for Mg(2+). Residue H153 participates in Mg(2+) binding.

It belongs to the DHBP synthase family. In terms of assembly, homodimer. It depends on Mg(2+) as a cofactor. Mn(2+) serves as cofactor.

It carries out the reaction D-ribulose 5-phosphate = (2S)-2-hydroxy-3-oxobutyl phosphate + formate + H(+). It functions in the pathway cofactor biosynthesis; riboflavin biosynthesis; 2-hydroxy-3-oxobutyl phosphate from D-ribulose 5-phosphate: step 1/1. In terms of biological role, catalyzes the conversion of D-ribulose 5-phosphate to formate and 3,4-dihydroxy-2-butanone 4-phosphate. The chain is 3,4-dihydroxy-2-butanone 4-phosphate synthase from Shewanella putrefaciens (strain CN-32 / ATCC BAA-453).